Here is a 435-residue protein sequence, read N- to C-terminus: C4-dicarboxylate transport protein (435 aa).

Helical transmembrane passes span 4-24 (SLFKSLYFQVLTAIAIGILLG), 44-64 (LIKMIIAPVIFCTVVTGIAGM), 76-96 (VALLYFEIVSTIALIIGLIIV), 142-162 (IGAFASGNILQVLLFAVLFGF), 184-204 (VIFGIINMIMRLAPIGAFGAM), 222-242 (LIICFYITCILFVVVVLGTIA), 289-309 (VVGLVIPTGYSFNLDGTSIYL), 326-346 (IFHQITLLVVLLLSSKGVAGV), and 352-372 (IVLAATISAVGHLPVAGLALI).

It belongs to the dicarboxylate/amino acid:cation symporter (DAACS) (TC 2.A.23) family.

It is found in the cell inner membrane. Functionally, responsible for the transport of dicarboxylates such as succinate, fumarate, and malate from the periplasm across the membrane. In Salmonella paratyphi A (strain ATCC 9150 / SARB42), this protein is C4-dicarboxylate transport protein.